Here is a 722-residue protein sequence, read N- to C-terminus: Glycine--tRNA ligase beta subunit (722 aa).

It belongs to the class-II aminoacyl-tRNA synthetase family. As to quaternary structure, tetramer of two alpha and two beta subunits.

Its subcellular location is the cytoplasm. It catalyses the reaction tRNA(Gly) + glycine + ATP = glycyl-tRNA(Gly) + AMP + diphosphate. This Xylella fastidiosa (strain M12) protein is Glycine--tRNA ligase beta subunit.